A 398-amino-acid polypeptide reads, in one-letter code: Leucine carboxyl methyltransferase 1 (398 aa).

Polar residues predominate over residues 1-11 (MSASQIPNLNT). Positions 1-54 (MSASQIPNLNTLRRGGGRGRLRGRGGFETGAPSEDRHGSRGLAAQDRVVQGTDN) are disordered. S-adenosyl-L-methionine contacts are provided by residues Arg-97, Gly-123, Asp-151, and 201–202 (DL). Residues 208 to 218 (SGSATTSRSPS) are compositionally biased toward low complexity. The tract at residues 208–232 (SGSATTSRSPSSPNPAEKDQPPCPL) is disordered. Position 246 (Glu-246) interacts with S-adenosyl-L-methionine.

This sequence belongs to the methyltransferase superfamily. LCMT family.

The catalysed reaction is [phosphatase 2A protein]-C-terminal L-leucine + S-adenosyl-L-methionine = [phosphatase 2A protein]-C-terminal L-leucine methyl ester + S-adenosyl-L-homocysteine. Functionally, methylates the carboxyl group of the C-terminal leucine residue of protein phosphatase 2A catalytic subunits to form alpha-leucine ester residues. This is Leucine carboxyl methyltransferase 1 (ppm1) from Aspergillus fumigatus (strain ATCC MYA-4609 / CBS 101355 / FGSC A1100 / Af293) (Neosartorya fumigata).